Here is a 195-residue protein sequence, read N- to C-terminus: 3-hydroxyanthranilate 3,4-dioxygenase (195 aa).

Arginine 50 contacts O2. Histidine 54, glutamate 60, and histidine 102 together coordinate Fe cation. Glutamate 60 serves as a coordination point for substrate. 2 residues coordinate substrate: arginine 106 and glutamate 116. A divalent metal cation-binding residues include cysteine 131, cysteine 136, cysteine 170, and cysteine 173.

It belongs to the 3-HAO family. Fe(2+) is required as a cofactor.

The protein resides in the cytoplasm. It catalyses the reaction 3-hydroxyanthranilate + O2 = (2Z,4Z)-2-amino-3-carboxymuconate 6-semialdehyde. The protein operates within cofactor biosynthesis; NAD(+) biosynthesis; quinolinate from L-kynurenine: step 3/3. Catalyzes the oxidative ring opening of 3-hydroxyanthranilate to 2-amino-3-carboxymuconate semialdehyde, which spontaneously cyclizes to quinolinate. In Aspergillus terreus (strain NIH 2624 / FGSC A1156), this protein is 3-hydroxyanthranilate 3,4-dioxygenase (bna1).